Consider the following 145-residue polypeptide: Ribonuclease H (145 aa).

Positions methionine 1–alanine 141 constitute an RNase H type-1 domain. Positions 9, 47, 69, and 133 each coordinate Mg(2+).

It belongs to the RNase H family. Monomer. The cofactor is Mg(2+).

The protein localises to the cytoplasm. The catalysed reaction is Endonucleolytic cleavage to 5'-phosphomonoester.. Functionally, endonuclease that specifically degrades the RNA of RNA-DNA hybrids. In Cupriavidus metallidurans (strain ATCC 43123 / DSM 2839 / NBRC 102507 / CH34) (Ralstonia metallidurans), this protein is Ribonuclease H.